A 568-amino-acid polypeptide reads, in one-letter code: 3-(3-hydroxy-phenyl)propionate/3-hydroxycinnamic acid hydroxylase (568 aa).

FAD is bound by residues 13–42 (DVVI…IVEE) and 278–288 (FRKGRMFLAGD).

Belongs to the PheA/TfdB FAD monooxygenase family. FAD serves as cofactor.

The enzyme catalyses 3-(3-hydroxyphenyl)propanoate + NADH + O2 + H(+) = 3-(2,3-dihydroxyphenyl)propanoate + NAD(+) + H2O. It catalyses the reaction (2E)-3-(3-hydroxyphenyl)prop-2-enoate + NADH + O2 + H(+) = (2E)-3-(2,3-dihydroxyphenyl)prop-2-enoate + NAD(+) + H2O. It participates in aromatic compound metabolism; 3-phenylpropanoate degradation. Functionally, catalyzes the insertion of one atom of molecular oxygen into position 2 of the phenyl ring of 3-(3-hydroxyphenyl)propionate (3-HPP) and hydroxycinnamic acid (3HCI). In Mycobacterium sp. (strain JLS), this protein is 3-(3-hydroxy-phenyl)propionate/3-hydroxycinnamic acid hydroxylase.